A 571-amino-acid chain; its full sequence is Zinc metalloproteinase-disintegrin-like jararhagin (571 aa).

A propeptide spanning residues 1 to 150 is cleaved from the precursor; sequence ATRPKGAVQP…KKASQLAFTA (150 aa). Residue Glu151 is modified to Pyrrolidone carboxylic acid (Glu). The Peptidase M12B domain occupies 159-355; the sequence is KYIEFFVVVD…HNPECIINEP (197 aa). The Ca(2+) site is built by Glu162 and Asp246. Disulfide bonds link Cys270–Cys350, Cys310–Cys334, and Cys312–Cys317. Residue His295 participates in Zn(2+) binding. Glu296 is a catalytic residue. Residues His299 and His305 each coordinate Zn(2+). N-linked (GlcNAc...) asparagine glycosylation occurs at Asn333. Ca(2+) is bound by residues Cys350, Asn353, Val365, Asn368, Leu370, Glu372, Glu375, and Asp378. The 87-residue stretch at 363 to 449 folds into the Disintegrin domain; that stretch reads PPVCGNELLE…ECPADVFHKN (87 aa). 22 disulfide bridges follow: Cys366/Cys385, Cys366/Cys395, Cys377/Cys390, Cys377/Cys395, Cys379/Cys385, Cys389/Cys412, Cys403/Cys409, Cys408/Cys434, Cys421/Cys441, Cys428/Cys453, Cys428/Cys460, Cys453/Cys465, Cys460/Cys465, Cys472/Cys487, Cys472/Cys522, Cys487/Cys533, Cys500/Cys510, Cys510/Cys517, Cys517/Cys559, Cys522/Cys533, Cys553/Cys564, and Cys559/Cys564. The D/ECD-tripeptide signature appears at 427-429; sequence ECD. Ca(2+) contacts are provided by Asp429, Pro430, Glu432, Asp444, and Val445.

This sequence belongs to the venom metalloproteinase (M12B) family. P-III subfamily. P-IIIb sub-subfamily. As to quaternary structure, monomer (Jararhagin and Jararhagin-C) and dimer (Jaracetin). Zn(2+) is required as a cofactor. Post-translationally, the N-terminus of Jararhagin is blocked. As to expression, expressed by the venom gland.

It localises to the secreted. It catalyses the reaction Cleavage of 10-His-|-Leu-11, 14-Ala-|-Leu-15, 16-Tyr-|-Leu-17 and 24-Phe-|-Phe-25 bonds in insulin B chain.. Its activity is regulated as follows. Inhibited by EDTA, 1,10 phenanthroline and batimastat (a peptidomimetic MMP inhibitor). In terms of biological role, snake venom zinc metalloproteinase-disintegrin-like jararhagin: causes hemorrhage. This is the result of the degradation of sub-endothelial matrix proteins leading to the disruption of the blood vessel endothelium, with accompanying disturbances in platelet function. It is able to degrade von Willebrand factor (vWF) and it hydrolyzes the alpha-chain of fibrinogen (FGA) while leaving the beta and gamma chains unaffected. It inhibits collagen-induced platelet aggregation through the binding to alpha-2/beta-1 integrin (ITGA2/ITGB1) (collagen receptor), and it cleaves the beta-1 subunit of the same integrin, inhibiting platelet interaction and ultimately causing impairment of signal transduction. It has inability to be affected by the plasma inhibitor alpha(2)-macroglobulin. In fibroblasts, it functions as a collagen-mimetic substrate and, in endothelial cells, it causes apoptosis and indirectly inhibits cell proliferation by release of angiostatin-like compounds. It induces a strong pro-inflammatory response characterized by intense leukocyte accumulation and release of cytokines at the site of the injection. Although hemorrhage and edema are a response to the direct effect of this toxin, jararhagin-induced inflammation and necrosis are dependent on macrophages and key pro-inflammatory cytokines or their receptors. It also possesses anti-tumorgenic properties. The monomeric form inhibits collagen- and ADP-induced platelet aggregation, but has no effect on glycoprotein Ib-IX-dependent (GP1BA/GP5/GP9) platelet agglutination. Locally activates the early events of an acute inflammatory response as leukocyte rolling and pro-inflammatory cytokine release. Its function is as follows. The dimeric form jaracetin may be a dimeric form of jararhagin-C. It binds to von Willebrand factor (VWF) and induces its interaction with GPIbalpha (GP1BA) (via the vWF A1 domain), resulting in platelet aggregation. Also binds the alpha-2 subunit of the alpha-2/beta-1 (ITGA2/ITGB1) integrin. It potently induces platelet aggregation in citrated platelet-rich plasma. In Bothrops jararaca (Jararaca), this protein is Zinc metalloproteinase-disintegrin-like jararhagin.